A 225-amino-acid chain; its full sequence is MTKNIVITVDGPSGAGKGTLCYALANRLGFALLDSGAIYRVTALAALQCKADLTNEAELAELAAHLDIEFLPEAGEVKVMLGGEDVSGLIRTQEVADAASKVAVFPQVRSALLQLQKDFATPKGLIADGRDMGTVVFPTAQVKLFLDASAEERAKRRFKQLQNKGISGNFDQILAEIKDRDFRDRNRPVAPLKPADDALLLDSTTLSIEEVIAQALSYIHQKVKI.

11 to 19 lines the ATP pocket; sequence GPSGAGKGT.

It belongs to the cytidylate kinase family. Type 1 subfamily.

Its subcellular location is the cytoplasm. It catalyses the reaction CMP + ATP = CDP + ADP. It carries out the reaction dCMP + ATP = dCDP + ADP. The protein is Cytidylate kinase of Mannheimia succiniciproducens (strain KCTC 0769BP / MBEL55E).